We begin with the raw amino-acid sequence, 131 residues long: Single-stranded DNA-binding protein 1 (131 aa).

The region spanning 1–103 is the SSB domain; that stretch reads MYNKVIAIGR…VLCQSFQLLE (103 aa).

As to quaternary structure, homotetramer.

The sequence is that of Single-stranded DNA-binding protein 1 (ssb1) from Streptococcus pyogenes serotype M6 (strain ATCC BAA-946 / MGAS10394).